A 140-amino-acid chain; its full sequence is Nucleoside diphosphate kinase (140 aa).

Residues K11, F59, R87, T93, R104, and N114 each contribute to the ATP site. H117 (pros-phosphohistidine intermediate) is an active-site residue.

This sequence belongs to the NDK family. In terms of assembly, homotetramer. Mg(2+) serves as cofactor.

The protein localises to the cytoplasm. The catalysed reaction is a 2'-deoxyribonucleoside 5'-diphosphate + ATP = a 2'-deoxyribonucleoside 5'-triphosphate + ADP. It carries out the reaction a ribonucleoside 5'-diphosphate + ATP = a ribonucleoside 5'-triphosphate + ADP. In terms of biological role, major role in the synthesis of nucleoside triphosphates other than ATP. The ATP gamma phosphate is transferred to the NDP beta phosphate via a ping-pong mechanism, using a phosphorylated active-site intermediate. The polypeptide is Nucleoside diphosphate kinase (Paracoccus denitrificans (strain Pd 1222)).